We begin with the raw amino-acid sequence, 397 residues long: MNYMMTDNEVFKEGLAGVPAAKSRVSHVDGTDGILEYRGIRIEELAKSSSFIEVAYLLIWGKLPTQAEIEEFEYEIRTHRRIKYHIRDMMKCFPETGHPMDALQTSAAALGLFYARRALDDPKYIRAAVVRLLAKIPTMVAAFHMIREGNDPIQPNDKLDYASNFLYMLTEKEPDPFAAKVFDVCLTLHAEHTMNASTFSARVTASTLTDPYAVVASAVGTLAGPLHGGANEEVLNMLEEIGSVENVRPYVEKCLANKQRIMGFGHRVYKVKDPRAIILQDLAEQLFAKMGHDEYYEIAVELEKVVEEYVGQKGIYPNVDFYSGLVYRKLDIPADLFTPLFAIARVAGWLAHWKEQLSVNKIYRPTQIYIGDHNLSYVPMTERVVSVARNEDPNAII.

Residues His266 and Asp320 contribute to the active site.

This sequence belongs to the citrate synthase family.

The enzyme catalyses oxaloacetate + acetyl-CoA + H2O = citrate + CoA + H(+). It participates in carbohydrate metabolism; tricarboxylic acid cycle; isocitrate from oxaloacetate: step 1/2. This is Citrate synthase (gltA) from Synechocystis sp. (strain ATCC 27184 / PCC 6803 / Kazusa).